A 726-amino-acid chain; its full sequence is Catalase-peroxidase (726 aa).

Positions 91 to 214 (WHSAGTYRIA…LGAVQMGLIY (124 aa)) form a cross-link, tryptophyl-tyrosyl-methioninium (Trp-Tyr) (with M-240). H92 functions as the Proton acceptor in the catalytic mechanism. Residues 214–240 (YVNPEGPNGNPDPLAAARDIRETFARM) constitute a cross-link (tryptophyl-tyrosyl-methioninium (Tyr-Met) (with W-91)). H255 serves as a coordination point for heme b. Positions 335–362 (AHQWRPKAGAGADSVPDPHDPNKRRTPS) are disordered.

The protein belongs to the peroxidase family. Peroxidase/catalase subfamily. Homodimer or homotetramer. Heme b serves as cofactor. Formation of the three residue Trp-Tyr-Met cross-link is important for the catalase, but not the peroxidase activity of the enzyme.

It carries out the reaction H2O2 + AH2 = A + 2 H2O. The enzyme catalyses 2 H2O2 = O2 + 2 H2O. Bifunctional enzyme with both catalase and broad-spectrum peroxidase activity. This is Catalase-peroxidase from Pseudomonas fluorescens (strain ATCC BAA-477 / NRRL B-23932 / Pf-5).